The following is a 622-amino-acid chain: WD repeat-containing protein 46 (622 aa).

The segment at Met1–Glu135 is disordered. Ser41 carries the post-translational modification Phosphoserine. The segment covering Glu106 to Lys118 has biased composition (basic and acidic residues). WD repeat units follow at residues Leu192–Asn233, Val234–Ile271, Val314–Lys353, Cys356–Ser395, and Thr398–Ser435. The segment at Ala547–Pro622 is disordered. Basic and acidic residues predominate over residues Val571–Gln582.

Part of the small subunit (SSU) processome, composed of more than 70 proteins and the RNA chaperone small nucleolar RNA (snoRNA) U3. Interacts with DDX21, NCL, NOP2 and EBNA1BP2.

It localises to the nucleus. The protein localises to the nucleolus. Scaffold component of the nucleolar structure. Required for localization of DDX21 and NCL to the granular compartment of the nucleolus. Part of the small subunit (SSU) processome, first precursor of the small eukaryotic ribosomal subunit. During the assembly of the SSU processome in the nucleolus, many ribosome biogenesis factors, an RNA chaperone and ribosomal proteins associate with the nascent pre-rRNA and work in concert to generate RNA folding, modifications, rearrangements and cleavage as well as targeted degradation of pre-ribosomal RNA by the RNA exosome. This Mus musculus (Mouse) protein is WD repeat-containing protein 46 (Wdr46).